The primary structure comprises 421 residues: Telomeric repeat-binding factor 1 (421 aa).

The tract at residues 1 to 30 is disordered; sequence MAETVSSAARDAPSREGWTDSDSPEQEEVG. The residue at position 2 (Ala2) is an N-acetylalanine. The segment at 49-255 is TRFH mediates dimerization; it reads ENAELVAEVE…AATKVVENEK (207 aa). Lys200 is covalently cross-linked (Glycyl lysine isopeptide (Lys-Gly) (interchain with G-Cter in SUMO2)). Ser206 is modified (phosphoserine; by ATM). The interaction with RLIM stretch occupies residues 252–365; it reads ENEKARTQAS…PDTDDKSGRR (114 aa). Residues 253-266 are compositionally biased toward basic and acidic residues; that stretch reads NEKARTQASKDRPD. The disordered stretch occupies residues 253–366; sequence NEKARTQASK…DTDDKSGRRK (114 aa). Polar residues predominate over residues 284-310; sequence VNGQQSTETEPLVDTVSSIRSHKNALS. Positions 313–367 match the Nuclear localization signal motif; sequence KHRRAPSDFSRNEARTGTLQCETTMERNRRTSGRNRLCVSENQPDTDDKSGRRKR. Residues 362-419 form the HTH myb-type domain; sequence SGRRKRQTWLWEEDRILKCGVKKYGEGNWAKILSHYKFNNRTSVMLKDRWRTMKRLKL. The segment at residues 390–415 is a DNA-binding region (H-T-H motif); sequence WAKILSHYKFNNRTSVMLKDRWRTMK.

In terms of assembly, homodimer; can contain both isoforms. Found in a complex with POT1; TINF2 and TNKS1. Interacts with ATM, TINF2, TNKS1, TNKS2, PINX1, NEK2 and MAPRE1. Component of the shelterin complex (telosome) composed of TERF1, TERF2, TINF2, TERF2IP ACD and POT1. Interacts with RLIM (via N-terminus). Interacts with FBXO4. Interaction with TINF2 protects against interaction with FBXO4 and subsequent polyubiquitination and proteasomal degradation. Interacts with GNL3L; this interaction promotes homodimerization. Interacts with TIN2. Interactions with GNL3L and TIN2 are mutually exclusive. Interacts with RTEL1. Interacts with CCDC79/TERB1. In terms of processing, phosphorylated preferentially on Ser-219 in an ATM-dependent manner in response to ionizing DNA damage. Post-translationally, ADP-ribosylation by TNKS1 or TNKS2 diminishes its ability to bind to telomeric DNA. Ubiquitinated by RLIM/RNF12, leading to its degradation by the proteasome. Ubiquitinated by a SCF (SKP1-CUL1-F-box protein) ubiquitin-protein ligase complex, leading to its degradation by the proteasome.

The protein resides in the nucleus. It is found in the chromosome. The protein localises to the telomere. Its subcellular location is the cytoplasm. It localises to the cytoskeleton. The protein resides in the spindle. Binds the telomeric double-stranded 5'-TTAGGG-3' repeat and negatively regulates telomere length. Involved in the regulation of the mitotic spindle. Component of the shelterin complex (telosome) that is involved in the regulation of telomere length and protection. Shelterin associates with arrays of double-stranded 5'-TTAGGG-3' repeats added by telomerase and protects chromosome ends; without its protective activity, telomeres are no longer hidden from the DNA damage surveillance and chromosome ends are inappropriately processed by DNA repair pathways. The protein is Telomeric repeat-binding factor 1 (Terf1) of Mus musculus (Mouse).